Reading from the N-terminus, the 286-residue chain is Ribosome maturation factor RimP (286 aa).

A compositionally biased stretch (acidic residues) spans 200–224 (LDGEDGDDTGVDAGDPDQDDADDAL). The disordered stretch occupies residues 200-286 (LDGEDGDDTG…ANASTVKETH (87 aa)). Over residues 248–267 (VGRKAKGKKASPKKSNAKKK) the composition is skewed to basic residues. The segment covering 273–286 (AASSANASTVKETH) has biased composition (polar residues).

This sequence belongs to the RimP family.

It is found in the cytoplasm. Its function is as follows. Required for maturation of 30S ribosomal subunits. The sequence is that of Ribosome maturation factor RimP from Xanthobacter autotrophicus (strain ATCC BAA-1158 / Py2).